Here is a 151-residue protein sequence, read N- to C-terminus: MKKIDVKILDPRVGQQFPLPTYATSGSAGLDLRACLDDAVELAPGATTLVPTGLAIHIADPSLAAVMLPRSGLGHKHGIVLGNLVGLIDSDYQGQLMVSIWNRGQDSFTIEPGERIAQMVFVPVVQAEFNLVEAFDATERGEGGFGHSGRK.

Substrate is bound by residues 70 to 72 (RSG), N83, 87 to 89 (LID), and M97.

This sequence belongs to the dUTPase family. It depends on Mg(2+) as a cofactor.

The catalysed reaction is dUTP + H2O = dUMP + diphosphate + H(+). Its pathway is pyrimidine metabolism; dUMP biosynthesis; dUMP from dCTP (dUTP route): step 2/2. Functionally, this enzyme is involved in nucleotide metabolism: it produces dUMP, the immediate precursor of thymidine nucleotides and it decreases the intracellular concentration of dUTP so that uracil cannot be incorporated into DNA. The polypeptide is Deoxyuridine 5'-triphosphate nucleotidohydrolase (Salmonella enteritidis PT4 (strain P125109)).